A 376-amino-acid chain; its full sequence is PqqA peptide cyclase (376 aa).

Residues 4–219 (VPPPLSVLLE…VETARRSLGD (216 aa)) form the Radical SAM core domain. [4Fe-4S] cluster is bound by residues Cys18, Cys22, and Cys25.

Belongs to the radical SAM superfamily. PqqE family. Interacts with PqqD. The interaction is necessary for activity of PqqE. [4Fe-4S] cluster is required as a cofactor.

The enzyme catalyses [PQQ precursor protein] + S-adenosyl-L-methionine = E-Y cross-linked-[PQQ precursor protein] + 5'-deoxyadenosine + L-methionine + H(+). It participates in cofactor biosynthesis; pyrroloquinoline quinone biosynthesis. In terms of biological role, catalyzes the cross-linking of a glutamate residue and a tyrosine residue in the PqqA protein as part of the biosynthesis of pyrroloquinoline quinone (PQQ). The polypeptide is PqqA peptide cyclase (Xanthomonas campestris pv. campestris (strain 8004)).